Reading from the N-terminus, the 500-residue chain is Serine carboxypeptidase 3 (500 aa).

A signal peptide spans 1–21 (MATARVSLILLVVVLAASACA). A propeptide spanning residues 22 to 73 (EGLRLPRDAKFPAAQAERLIRSLNLLPKEAGPTGAGDVPSVAPGELLERRVT) is cleaved from the precursor. Disulfide bonds link C126–C366, C294–C309, and C332–C337. An N-linked (GlcNAc...) asparagine glycan is attached at N144. S216 is an active-site residue. Residue D404 is part of the active site. C407 is a substrate binding site. The active site involves H461. Residues 485 to 500 (EEWLAELPEQPMYAAM) constitute a propeptide that is removed on maturation.

It belongs to the peptidase S10 family. As to quaternary structure, monomer.

The catalysed reaction is Release of a C-terminal amino acid with broad specificity.. The protein is Serine carboxypeptidase 3 (CBP3) of Oryza sativa subsp. japonica (Rice).